The chain runs to 921 residues: Isoleucine--tRNA ligase (921 aa).

Positions Pro57–His67 match the 'HIGH' region motif. Residue Glu552 coordinates L-isoleucyl-5'-AMP. The 'KMSKS' region signature appears at Lys593–Ser597. An ATP-binding site is contributed by Lys596. Positions 888, 891, 908, and 911 each coordinate Zn(2+).

Belongs to the class-I aminoacyl-tRNA synthetase family. IleS type 1 subfamily. In terms of assembly, monomer. Zn(2+) is required as a cofactor.

Its subcellular location is the cytoplasm. The catalysed reaction is tRNA(Ile) + L-isoleucine + ATP = L-isoleucyl-tRNA(Ile) + AMP + diphosphate. In terms of biological role, catalyzes the attachment of isoleucine to tRNA(Ile). As IleRS can inadvertently accommodate and process structurally similar amino acids such as valine, to avoid such errors it has two additional distinct tRNA(Ile)-dependent editing activities. One activity is designated as 'pretransfer' editing and involves the hydrolysis of activated Val-AMP. The other activity is designated 'posttransfer' editing and involves deacylation of mischarged Val-tRNA(Ile). The chain is Isoleucine--tRNA ligase from Listeria innocua serovar 6a (strain ATCC BAA-680 / CLIP 11262).